Here is a 230-residue protein sequence, read N- to C-terminus: Probable GTP-binding protein EngB (230 aa).

Residues Glu-36 to Ile-224 enclose the EngB-type G domain. GTP is bound by residues Gly-44–Ser-51, Gly-69–Lys-73, Asp-86–Gly-89, Asn-166–Asp-169, and Val-201–Ala-203. Residues Ser-51 and Thr-71 each contribute to the Mg(2+) site.

This sequence belongs to the TRAFAC class TrmE-Era-EngA-EngB-Septin-like GTPase superfamily. EngB GTPase family. The cofactor is Mg(2+).

In terms of biological role, necessary for normal cell division and for the maintenance of normal septation. This Methanococcus maripaludis (strain DSM 14266 / JCM 13030 / NBRC 101832 / S2 / LL) protein is Probable GTP-binding protein EngB.